A 181-amino-acid polypeptide reads, in one-letter code: MSSLTVYHENQPEQPLKLLTHAEDIASTLAEVGVRFERWEAAAPIAAGASQDEVIAAYAHEIERLKRERGYITVDVVSLNSDHPQKAELRAKFLDEHRHGEDEVRFFVAGRGLFVLHIEEHVYAVLCERNDLISVPAGTRHWFDMGEHPHFVAVRLFNNPEGWVAQFTGDDIASRFPLLED.

Residues H97, H99, E103, and H141 each coordinate Fe(2+). Ni(2+) is bound by residues H97, H99, E103, and H141.

This sequence belongs to the acireductone dioxygenase (ARD) family. Monomer. Fe(2+) serves as cofactor. It depends on Ni(2+) as a cofactor.

It carries out the reaction 1,2-dihydroxy-5-(methylsulfanyl)pent-1-en-3-one + O2 = 3-(methylsulfanyl)propanoate + CO + formate + 2 H(+). The catalysed reaction is 1,2-dihydroxy-5-(methylsulfanyl)pent-1-en-3-one + O2 = 4-methylsulfanyl-2-oxobutanoate + formate + 2 H(+). Its pathway is amino-acid biosynthesis; L-methionine biosynthesis via salvage pathway; L-methionine from S-methyl-5-thio-alpha-D-ribose 1-phosphate: step 5/6. Its function is as follows. Catalyzes 2 different reactions between oxygen and the acireductone 1,2-dihydroxy-3-keto-5-methylthiopentene (DHK-MTPene) depending upon the metal bound in the active site. Fe-containing acireductone dioxygenase (Fe-ARD) produces formate and 2-keto-4-methylthiobutyrate (KMTB), the alpha-ketoacid precursor of methionine in the methionine recycle pathway. Ni-containing acireductone dioxygenase (Ni-ARD) produces methylthiopropionate, carbon monoxide and formate, and does not lie on the methionine recycle pathway. This chain is Acireductone dioxygenase, found in Pseudomonas aeruginosa (strain UCBPP-PA14).